A 434-amino-acid polypeptide reads, in one-letter code: Protein trichome birefringence-like 3 (434 aa).

Residues Ile15–Thr35 traverse the membrane as a helical; Signal-anchor for type II membrane protein segment. Positions Gly166–Ser168 match the GDS motif motif. The DCXHWCLPGXXDXWN motif motif lies at Asp413–Asn427.

Belongs to the PC-esterase family. TBL subfamily.

The protein resides in the golgi apparatus membrane. Its function is as follows. Involved in secondary cell wall cellulose deposition. Required for normal stem development. May act as a bridging protein that binds pectin and other cell wall polysaccharides. Probably involved in maintaining esterification of pectins. May be involved in the specific O-acetylation of cell wall polymers. The polypeptide is Protein trichome birefringence-like 3 (TBL3) (Arabidopsis thaliana (Mouse-ear cress)).